The following is a 157-amino-acid chain: Small ribosomal subunit protein uS7 (157 aa).

This sequence belongs to the universal ribosomal protein uS7 family. Part of the 30S ribosomal subunit. Contacts proteins S9 and S11.

Its function is as follows. One of the primary rRNA binding proteins, it binds directly to 16S rRNA where it nucleates assembly of the head domain of the 30S subunit. Is located at the subunit interface close to the decoding center, probably blocks exit of the E-site tRNA. In Psychrobacter sp. (strain PRwf-1), this protein is Small ribosomal subunit protein uS7.